The sequence spans 257 residues: Acetylglutamate kinase (257 aa).

Substrate-binding positions include 43–44, Arg65, and Asn157; that span reads GG.

It belongs to the acetylglutamate kinase family. ArgB subfamily.

The protein resides in the cytoplasm. The enzyme catalyses N-acetyl-L-glutamate + ATP = N-acetyl-L-glutamyl 5-phosphate + ADP. It functions in the pathway amino-acid biosynthesis; L-arginine biosynthesis; N(2)-acetyl-L-ornithine from L-glutamate: step 2/4. Its function is as follows. Catalyzes the ATP-dependent phosphorylation of N-acetyl-L-glutamate. The protein is Acetylglutamate kinase of Actinobacillus succinogenes (strain ATCC 55618 / DSM 22257 / CCUG 43843 / 130Z).